We begin with the raw amino-acid sequence, 119 residues long: NLVQFSYLIQCANHGRRPTRHYMDYGCYCGWGGSGTPVDELDRCCKIHDDCYSDAEKKGCSPKMSAYDYYCGENGPYCRNIKKKCLRFVCDCDVEAAFCFAKAPYNNANWNIDTKKRCQ.

Intrachain disulfides connect C11-C71, C27-C118, C29-C45, C44-C99, C51-C92, C60-C85, and C78-C90. Residues Y28, G30, and G32 each contribute to the Ca(2+) site. H48 is an active-site residue. A Ca(2+)-binding site is contributed by D49. D93 is a catalytic residue.

This sequence belongs to the phospholipase A2 family. Group I subfamily. D49 sub-subfamily. Requires Ca(2+) as cofactor. Expressed by the venom gland.

It is found in the secreted. The enzyme catalyses a 1,2-diacyl-sn-glycero-3-phosphocholine + H2O = a 1-acyl-sn-glycero-3-phosphocholine + a fatty acid + H(+). Its function is as follows. Snake venom phospholipase A2 (PLA2) that inhibits neuromuscular transmission by blocking acetylcholine release from the nerve termini. Notechis II-5 is less toxic than notexin but has a higher specific phospholipase activity. PLA2 catalyzes the calcium-dependent hydrolysis of the 2-acyl groups in 3-sn-phosphoglycerides. The chain is Basic phospholipase A2 notechis II-5 from Notechis scutatus scutatus (Mainland tiger snake).